Here is an 894-residue protein sequence, read N- to C-terminus: MGIQTAAANDVAQHTPMMQQYLRIKADHPGTLVFYRMGDFYELFFEDAEKAARLLDLTLTQRGASAGNPIKMAGVPHHAVEQYLAKLVKLGESVAICEQIGDPATSKGPVERKVVRVVTPGTLTDAALLSDKSDVYLLAMCVAHNRRGVATSVGLAWLNLASGALRLAEVAPDQVAAALERIRPAEILVADTPSDSASWTPPVNAGALTRVPVWHFDVTSGTQRLCDQLEVAGLDGFGAHSLTCACGAAGALLLYAAATQGQQLRHVRSLKVEYESEYIGLDPATRRNLELTETLRGTESPTLCSLLDTCCTTMGSRLLRHWLHHPPRESAVAQARQQAIGALLDAPPGASIDSLRGALRQISDIERITGRLALLSARPRDLSSLRDTFIALPELRTQVAAVAPNADSLARIDASLEPPQACVELLKRAVAQEPSAMVRDGGVIARGYDAELDELRDISENCGQFLIDLETRERARTGIGNLRVEYNKVHGFYIEVTRGQTDKVPDDYRRRQTLKNAERYITPELKTFEDKALSAQERALARERSLYDALLQALLPFIPDCQRVASALAELDLLAAFGERARALDWVAPTFSANAGIEIEQGRHPVVEAQVEQFIANDCSLTPERKLLLITGPNMGGKSTFMRQTALIALLAYVGSYVPARRAAFGPIDRIFTRIGAADDLAGGRSTFMVEMTEAAAILNDATPQSLVLMDEIGRGTSTFDGLALAWAIARHLLAHNGCHTLFATHYFELTQLPAEFPQAANVHLSAVEHGHGIVFLHAVSEGPANQSYGLQVAQLAGVPNAVIRAARKHLAHLEQQSAAQPAPQLDLFATPMPMLLEDADDERDAKAEPAVPPAMQELVERLRGIDPNDLRPREALDLLYELHELAAAPDADH.

Position 632–639 (632–639 (GPNMGGKS)) interacts with ATP.

It belongs to the DNA mismatch repair MutS family.

Functionally, this protein is involved in the repair of mismatches in DNA. It is possible that it carries out the mismatch recognition step. This protein has a weak ATPase activity. This is DNA mismatch repair protein MutS from Paraburkholderia phytofirmans (strain DSM 17436 / LMG 22146 / PsJN) (Burkholderia phytofirmans).